Reading from the N-terminus, the 238-residue chain is Zinc finger protein ZAT6 (238 aa).

The span at methionine 1–methionine 15 shows a compositional bias: polar residues. Positions methionine 1–aspartate 42 are disordered. Residues lysine 30–arginine 38 carry the Nuclear localization signal motif. 2 C2H2-type zinc fingers span residues tyrosine 89–histidine 111 and histidine 148–histidine 170. Residues asparagine 175–phenylalanine 202 form a disordered region. Positions serine 180–serine 193 are enriched in low complexity.

It localises to the nucleus. In terms of biological role, probable transcription factor that regulates root development and phosphate (Pi) acquisition and homeostasis. Probably acts as a repressor of primary root growth and regulates Pi homeostasis through the control of root architecture. In Arabidopsis thaliana (Mouse-ear cress), this protein is Zinc finger protein ZAT6 (ZAT6).